A 149-amino-acid chain; its full sequence is Large ribosomal subunit protein bL9 (149 aa).

It belongs to the bacterial ribosomal protein bL9 family.

In terms of biological role, binds to the 23S rRNA. The sequence is that of Large ribosomal subunit protein bL9 from Actinobacillus pleuropneumoniae serotype 3 (strain JL03).